Reading from the N-terminus, the 207-residue chain is Ras-related protein Rab-8A (207 aa).

Positions 17, 18, 19, 20, 21, 22, 23, 39, and 40 each coordinate GTP. A Mg(2+)-binding site is contributed by Thr22. Short sequence motifs (switch) lie at residues Asp31–Phe45 and Asp63–Gly80. 2 residues coordinate Mg(2+): Thr40 and Asp63. GTP is bound by residues Gly66, Asn121, Lys122, Asp124, Ala152, and Lys153. Cysteine methyl ester is present on Cys204. Cys204 carries S-geranylgeranyl cysteine lipidation. The propeptide at Val205 to Leu207 is removed in mature form.

Belongs to the small GTPase superfamily. Rab family. The cofactor is Mg(2+).

It localises to the cell membrane. Its subcellular location is the golgi apparatus. The protein localises to the endosome membrane. It is found in the recycling endosome membrane. The protein resides in the cell projection. It localises to the cilium. Its subcellular location is the cytoplasmic vesicle. The protein localises to the phagosome membrane. It is found in the cytoplasm. The protein resides in the cytoskeleton. It localises to the microtubule organizing center. Its subcellular location is the centrosome. The protein localises to the centriole. It is found in the cilium basal body. The protein resides in the midbody. The enzyme catalyses GTP + H2O = GDP + phosphate + H(+). With respect to regulation, regulated by guanine nucleotide exchange factors (GEFs) which promote the exchange of bound GDP for free GTP, GTPase activating proteins (GAPs) which increase the GTP hydrolysis activity, and GDP dissociation inhibitors (GDIs) which inhibit the dissociation of the nucleotide from the GTPase. Activated in response to insulin. Its function is as follows. The small GTPases Rab are key regulators of intracellular membrane trafficking, from the formation of transport vesicles to their fusion with membranes. Rabs cycle between an inactive GDP-bound form and an active GTP-bound form that is able to recruit to membranes different sets of downstream effectors directly responsible for vesicle formation, movement, tethering and fusion. RAB8A is involved in polarized vesicular trafficking and neurotransmitter release. Together with RAB11A, RAB3IP, the exocyst complex, PARD3, PRKCI, ANXA2, CDC42 and DNMBP promotes transcytosis of PODXL to the apical membrane initiation sites (AMIS), apical surface formation and lumenogenesis. Regulates the compacted morphology of the Golgi. Together with MYO5B and RAB11A participates in epithelial cell polarization. Also involved in membrane trafficking to the cilium and ciliogenesis. Together with MICALL2, may also regulate adherens junction assembly. May play a role in insulin-induced transport to the plasma membrane of the glucose transporter GLUT4 and therefore play a role in glucose homeostasis. Involved in autophagy. Participates in the export of a subset of neosynthesized proteins through a Rab8-Rab10-Rab11-dependent endososomal export route. Targeted to and stabilized on stressed lysosomes through LRRK2 phosphorylation. Suppresses stress-induced lysosomal enlargement through EHBP1 and EHNP1L1 effector proteins. The chain is Ras-related protein Rab-8A (RAB8A) from Gallus gallus (Chicken).